A 157-amino-acid polypeptide reads, in one-letter code: 2-C-methyl-D-erythritol 2,4-cyclodiphosphate synthase (157 aa).

A divalent metal cation is bound by residues Asp-8 and His-10. 4-CDP-2-C-methyl-D-erythritol 2-phosphate is bound by residues 8–10 (DVH) and 34–35 (HS). His-42 is an a divalent metal cation binding site. 4-CDP-2-C-methyl-D-erythritol 2-phosphate is bound by residues 56–58 (DIG), 61–65 (FPDTD), 100–106 (AQAPKMA), 132–135 (TTTE), Phe-139, and Arg-142.

It belongs to the IspF family. In terms of assembly, homotrimer. It depends on a divalent metal cation as a cofactor.

It catalyses the reaction 4-CDP-2-C-methyl-D-erythritol 2-phosphate = 2-C-methyl-D-erythritol 2,4-cyclic diphosphate + CMP. The protein operates within isoprenoid biosynthesis; isopentenyl diphosphate biosynthesis via DXP pathway; isopentenyl diphosphate from 1-deoxy-D-xylulose 5-phosphate: step 4/6. Functionally, involved in the biosynthesis of isopentenyl diphosphate (IPP) and dimethylallyl diphosphate (DMAPP), two major building blocks of isoprenoid compounds. Catalyzes the conversion of 4-diphosphocytidyl-2-C-methyl-D-erythritol 2-phosphate (CDP-ME2P) to 2-C-methyl-D-erythritol 2,4-cyclodiphosphate (ME-CPP) with a corresponding release of cytidine 5-monophosphate (CMP). This Stutzerimonas stutzeri (strain A1501) (Pseudomonas stutzeri) protein is 2-C-methyl-D-erythritol 2,4-cyclodiphosphate synthase.